A 403-amino-acid polypeptide reads, in one-letter code: Sulfate adenylyltransferase (403 aa).

The protein belongs to the sulfate adenylyltransferase family.

It catalyses the reaction sulfate + ATP + H(+) = adenosine 5'-phosphosulfate + diphosphate. It functions in the pathway sulfur metabolism; hydrogen sulfide biosynthesis; sulfite from sulfate: step 1/3. The protein is Sulfate adenylyltransferase of Pelodictyon phaeoclathratiforme (strain DSM 5477 / BU-1).